A 169-amino-acid polypeptide reads, in one-letter code: Gametocyte-specific factor 1-like (169 aa).

2 CHHC U11-48K-type zinc fingers span residues 6-33 (LETC…RRKN) and 40-67 (MASC…VNKS). Zn(2+)-binding residues include Cys9, His15, His25, Cys29, Cys43, His49, His59, and Cys63. 2 disordered regions span residues 67 to 103 (STME…LPNP) and 131 to 169 (SDTR…LLKA). Over residues 131-158 (SDTRESETDDHNPIPDCPRRRSSDRESE) the composition is skewed to basic and acidic residues.

The protein belongs to the UPF0224 (FAM112) family.

This Bos taurus (Bovine) protein is Gametocyte-specific factor 1-like (GTSF1L).